The sequence spans 258 residues: Type III pantothenate kinase (258 aa).

6 to 13 is a binding site for ATP; that stretch reads DVGNTNTV. Residues Tyr100 and 107–110 each bind substrate; that span reads GADR. Catalysis depends on Asp109, which acts as the Proton acceptor. Asp129 lines the K(+) pocket. Residue Thr132 coordinates ATP. Thr184 provides a ligand contact to substrate.

Belongs to the type III pantothenate kinase family. Homodimer. It depends on NH4(+) as a cofactor. The cofactor is K(+).

It is found in the cytoplasm. The enzyme catalyses (R)-pantothenate + ATP = (R)-4'-phosphopantothenate + ADP + H(+). The protein operates within cofactor biosynthesis; coenzyme A biosynthesis; CoA from (R)-pantothenate: step 1/5. In terms of biological role, catalyzes the phosphorylation of pantothenate (Pan), the first step in CoA biosynthesis. The polypeptide is Type III pantothenate kinase (Geobacillus thermodenitrificans (strain NG80-2)).